The following is a 211-amino-acid chain: Endoplasmic reticulum vesicle protein 25 (211 aa).

The signal sequence occupies residues 1–19 (MKSIVSVLTLLLLINAVAA). Residues 20 to 180 (LRFVLPAKDK…TNESTNRRVK (161 aa)) are Lumenal-facing. Residues 33 to 121 (PFCVRDFVKN…TKEIDLSVAI (89 aa)) enclose the GOLD domain. Residues 181–201 (FFSVGITLALIALGVWQIIYL) form a helical membrane-spanning segment. Topologically, residues 202–211 (RSYFRSKHII) are cytoplasmic.

The protein belongs to the EMP24/GP25L family.

It localises to the endoplasmic reticulum membrane. The protein localises to the golgi apparatus membrane. Constituent of COPII-coated endoplasmic reticulum-derived transport vesicles. Required for efficient transport of a subset of secretory proteins to the Golgi. Facilitates retrograde transport from the Golgi to the endoplasmic reticulum. The polypeptide is Endoplasmic reticulum vesicle protein 25 (ERV25) (Yarrowia lipolytica (strain CLIB 122 / E 150) (Yeast)).